We begin with the raw amino-acid sequence, 203 residues long: Holliday junction branch migration complex subunit RuvA (203 aa).

Positions 1–63 (MYEYLKGLVT…DTDITLFGFY (63 aa)) are domain I. The interval 64 to 142 (DLDEKQLFQK…DLEQSATLVG (79 aa)) is domain II. The segment at 143-153 (QTAIDLGSQGD) is flexible linker. A domain III region spans residues 153–203 (DSPELSDALAALSALGYSAREVKAITPKLTDFAAQTTDQYLREGLRLLMKK).

The protein belongs to the RuvA family. Homotetramer. Forms an RuvA(8)-RuvB(12)-Holliday junction (HJ) complex. HJ DNA is sandwiched between 2 RuvA tetramers; dsDNA enters through RuvA and exits via RuvB. An RuvB hexamer assembles on each DNA strand where it exits the tetramer. Each RuvB hexamer is contacted by two RuvA subunits (via domain III) on 2 adjacent RuvB subunits; this complex drives branch migration. In the full resolvosome a probable DNA-RuvA(4)-RuvB(12)-RuvC(2) complex forms which resolves the HJ.

Its subcellular location is the cytoplasm. The RuvA-RuvB-RuvC complex processes Holliday junction (HJ) DNA during genetic recombination and DNA repair, while the RuvA-RuvB complex plays an important role in the rescue of blocked DNA replication forks via replication fork reversal (RFR). RuvA specifically binds to HJ cruciform DNA, conferring on it an open structure. The RuvB hexamer acts as an ATP-dependent pump, pulling dsDNA into and through the RuvAB complex. HJ branch migration allows RuvC to scan DNA until it finds its consensus sequence, where it cleaves and resolves the cruciform DNA. This is Holliday junction branch migration complex subunit RuvA from Latilactobacillus sakei subsp. sakei (strain 23K) (Lactobacillus sakei subsp. sakei).